The sequence spans 147 residues: uncharacterized protein (147 aa).

A run of 2 helical transmembrane segments spans residues 35-55 and 62-82; these read TIQLAGWISVLFMLGYNFGNH and IWLLVITALLVIGLLIHLFEP.

As to quaternary structure, has been detected in a cytochrome bc1-aa3 supercomplex; its deletion however leaves complex activity unaffected.

The protein localises to the cell membrane. This is an uncharacterized protein from Corynebacterium glutamicum (strain ATCC 13032 / DSM 20300 / JCM 1318 / BCRC 11384 / CCUG 27702 / LMG 3730 / NBRC 12168 / NCIMB 10025 / NRRL B-2784 / 534).